Here is a 277-residue protein sequence, read N- to C-terminus: Pantothenate synthetase (277 aa).

ATP is bound at residue 26–33; it reads MGNLHEGH. H33 serves as the catalytic Proton donor. Position 57 (Q57) interacts with (R)-pantoate. Q57 serves as a coordination point for beta-alanine. 144–147 contributes to the ATP binding site; it reads GKKD. Q150 serves as a coordination point for (R)-pantoate. ATP is bound by residues V173 and 181 to 184; that span reads LSSR.

Belongs to the pantothenate synthetase family. As to quaternary structure, homodimer.

It is found in the cytoplasm. The catalysed reaction is (R)-pantoate + beta-alanine + ATP = (R)-pantothenate + AMP + diphosphate + H(+). It participates in cofactor biosynthesis; (R)-pantothenate biosynthesis; (R)-pantothenate from (R)-pantoate and beta-alanine: step 1/1. Catalyzes the condensation of pantoate with beta-alanine in an ATP-dependent reaction via a pantoyl-adenylate intermediate. In Paraburkholderia xenovorans (strain LB400), this protein is Pantothenate synthetase.